Reading from the N-terminus, the 100-residue chain is Urease subunit gamma (100 aa).

It belongs to the urease gamma subunit family. As to quaternary structure, heterotrimer of UreA (gamma), UreB (beta) and UreC (alpha) subunits. Three heterotrimers associate to form the active enzyme.

It localises to the cytoplasm. The catalysed reaction is urea + 2 H2O + H(+) = hydrogencarbonate + 2 NH4(+). Its pathway is nitrogen metabolism; urea degradation; CO(2) and NH(3) from urea (urease route): step 1/1. The chain is Urease subunit gamma from Blochmanniella pennsylvanica (strain BPEN).